The chain runs to 381 residues: Succinyl-diaminopimelate desuccinylase (381 aa).

A Zn(2+)-binding site is contributed by histidine 68. Aspartate 70 is a catalytic residue. Aspartate 101 lines the Zn(2+) pocket. The active-site Proton acceptor is glutamate 135. The Zn(2+) site is built by glutamate 136, glutamate 164, and histidine 350.

Belongs to the peptidase M20A family. DapE subfamily. In terms of assembly, homodimer. Zn(2+) serves as cofactor. Co(2+) is required as a cofactor.

It carries out the reaction N-succinyl-(2S,6S)-2,6-diaminopimelate + H2O = (2S,6S)-2,6-diaminopimelate + succinate. Its pathway is amino-acid biosynthesis; L-lysine biosynthesis via DAP pathway; LL-2,6-diaminopimelate from (S)-tetrahydrodipicolinate (succinylase route): step 3/3. Its function is as follows. Catalyzes the hydrolysis of N-succinyl-L,L-diaminopimelic acid (SDAP), forming succinate and LL-2,6-diaminopimelate (DAP), an intermediate involved in the bacterial biosynthesis of lysine and meso-diaminopimelic acid, an essential component of bacterial cell walls. This is Succinyl-diaminopimelate desuccinylase from Neisseria gonorrhoeae (strain NCCP11945).